The chain runs to 206 residues: MSKGSSTKKWLHEHTSDYYVIQANKLGYRSRASFKILEIQDKYQLFKPNMFVVDLGASPGGWSEQVIKYIGKNGKLIALDLLEMAPIAGVEFIQGDFSSDETYQKLNTLVNNQKIDCVISDMAPNLSGNKTSDQAKSIYLLELALDFANTNLNKNGSFVAKVFQGQGSDEYLKLVRESFNKVIQFKPKSSRAKSREFYVIATEFKG.

S-adenosyl-L-methionine contacts are provided by glycine 60, tryptophan 62, aspartate 80, aspartate 96, and aspartate 121. The active-site Proton acceptor is the lysine 161.

Belongs to the class I-like SAM-binding methyltransferase superfamily. RNA methyltransferase RlmE family.

The protein localises to the cytoplasm. It carries out the reaction uridine(2552) in 23S rRNA + S-adenosyl-L-methionine = 2'-O-methyluridine(2552) in 23S rRNA + S-adenosyl-L-homocysteine + H(+). Specifically methylates the uridine in position 2552 of 23S rRNA at the 2'-O position of the ribose in the fully assembled 50S ribosomal subunit. In Francisella tularensis subsp. holarctica (strain FTNF002-00 / FTA), this protein is Ribosomal RNA large subunit methyltransferase E.